Consider the following 316-residue polypeptide: Apolipoprotein E (316 aa).

A signal peptide spans 1–18; sequence MKVLWVALVVALLAGCQA. 8 consecutive repeat copies span residues 79–100, 101–122, 123–144, 145–166, 167–188, 189–210, 211–232, and 233–254. The interval 79–254 is 8 X 22 AA approximate tandem repeats; that stretch reads VLMEETMKEV…RLDKMRQQLE (176 aa). Position 142 is a methionine sulfoxide (M142). S146 carries the phosphoserine modification. The segment at 157–167 is LDL and other lipoprotein receptors binding; the sequence is HLRKLRKRLLR. Heparin is bound at residue 161–164; it reads LRKR. Residues 209-289 are lipid-binding and lipoprotein association; sequence AATLSTQVGQ…SWFEPLVEDM (81 aa). Heparin is bound at residue 228–235; that stretch reads RQKLHGRL. The tract at residues 265–316 is homooligomerization; it reads SQIRLQAEAFQARLRSWFEPLVEDMQRQWAGLVEKVQLALHLSPTSPPSENH. The interval 277 to 289 is specificity for association with VLDL; the sequence is RLRSWFEPLVEDM.

This sequence belongs to the apolipoprotein A1/A4/E family. In terms of assembly, homotetramer. May interact with ABCA1; functionally associated with ABCA1 in the biogenesis of HDLs. May interact with APP/A4 amyloid-beta peptide; the interaction is extremely stable in vitro but its physiological significance is unclear. May interact with MAPT. May interact with MAP2. In the cerebrospinal fluid, interacts with secreted SORL1. Interacts with PMEL; this allows the loading of PMEL luminal fragment on ILVs to induce fibril nucleation. APOE exists as multiple glycosylated and sialylated glycoforms within cells and in plasma. The extent of glycosylation and sialylation are tissue and context specific. In terms of processing, glycated in plasma VLDL. Post-translationally, phosphorylated by FAM20C in the extracellular medium.

The protein resides in the secreted. The protein localises to the extracellular space. Its subcellular location is the extracellular matrix. It localises to the extracellular vesicle. It is found in the endosome. The protein resides in the multivesicular body. In terms of biological role, APOE is an apolipoprotein, a protein associating with lipid particles, that mainly functions in lipoprotein-mediated lipid transport between organs via the plasma and interstitial fluids. APOE is a core component of plasma lipoproteins and is involved in their production, conversion and clearance. Apolipoproteins are amphipathic molecules that interact both with lipids of the lipoprotein particle core and the aqueous environment of the plasma. As such, APOE associates with chylomicrons, chylomicron remnants, very low density lipoproteins (VLDL) and intermediate density lipoproteins (IDL) but shows a preferential binding to high-density lipoproteins (HDL). It also binds a wide range of cellular receptors including the LDL receptor/LDLR and the very low-density lipoprotein receptor/VLDLR that mediate the cellular uptake of the APOE-containing lipoprotein particles. Finally, APOE also has a heparin-binding activity and binds heparan-sulfate proteoglycans on the surface of cells, a property that supports the capture and the receptor-mediated uptake of APOE-containing lipoproteins by cells. The chain is Apolipoprotein E (APOE) from Ovis aries (Sheep).